The chain runs to 142 residues: Large ribosomal subunit protein uL11 (142 aa).

Belongs to the universal ribosomal protein uL11 family. Part of the ribosomal stalk of the 50S ribosomal subunit. Interacts with L10 and the large rRNA to form the base of the stalk. L10 forms an elongated spine to which L12 dimers bind in a sequential fashion forming a multimeric L10(L12)X complex. One or more lysine residues are methylated.

In terms of biological role, forms part of the ribosomal stalk which helps the ribosome interact with GTP-bound translation factors. This Shewanella sp. (strain W3-18-1) protein is Large ribosomal subunit protein uL11.